The chain runs to 420 residues: Serine hydroxymethyltransferase (420 aa).

(6S)-5,6,7,8-tetrahydrofolate contacts are provided by residues Leu121 and 125–127 (GHL). Lys230 carries the N6-(pyridoxal phosphate)lysine modification. (6S)-5,6,7,8-tetrahydrofolate is bound by residues Glu246 and 354–356 (SPF).

Belongs to the SHMT family. As to quaternary structure, homodimer. Pyridoxal 5'-phosphate is required as a cofactor.

It is found in the cytoplasm. The enzyme catalyses (6R)-5,10-methylene-5,6,7,8-tetrahydrofolate + glycine + H2O = (6S)-5,6,7,8-tetrahydrofolate + L-serine. It participates in one-carbon metabolism; tetrahydrofolate interconversion. The protein operates within amino-acid biosynthesis; glycine biosynthesis; glycine from L-serine: step 1/1. Catalyzes the reversible interconversion of serine and glycine with tetrahydrofolate (THF) serving as the one-carbon carrier. This reaction serves as the major source of one-carbon groups required for the biosynthesis of purines, thymidylate, methionine, and other important biomolecules. Also exhibits THF-independent aldolase activity toward beta-hydroxyamino acids, producing glycine and aldehydes, via a retro-aldol mechanism. The protein is Serine hydroxymethyltransferase of Rickettsia akari (strain Hartford).